We begin with the raw amino-acid sequence, 213 residues long: 3-isopropylmalate dehydratase small subunit (213 aa).

It belongs to the LeuD family. LeuD type 1 subfamily. In terms of assembly, heterodimer of LeuC and LeuD.

The catalysed reaction is (2R,3S)-3-isopropylmalate = (2S)-2-isopropylmalate. Its pathway is amino-acid biosynthesis; L-leucine biosynthesis; L-leucine from 3-methyl-2-oxobutanoate: step 2/4. In terms of biological role, catalyzes the isomerization between 2-isopropylmalate and 3-isopropylmalate, via the formation of 2-isopropylmaleate. The protein is 3-isopropylmalate dehydratase small subunit of Neisseria meningitidis serogroup B (strain ATCC BAA-335 / MC58).